We begin with the raw amino-acid sequence, 129 residues long: DNA-directed RNA polymerase II subunit RPB9 (129 aa).

Zn(2+) is bound by residues C21, C24, C43, C46, C90, C93, C118, and C123. Residues C21–C46 form a C4-type zinc finger. The TFIIS-type zinc finger occupies E86 to T128.

The protein belongs to the archaeal RpoM/eukaryotic RPA12/RPB9/RPC11 RNA polymerase family. As to quaternary structure, component of the RNA polymerase II (Pol II) complex consisting of 12 subunits.

The protein localises to the nucleus. Its subcellular location is the nucleolus. DNA-dependent RNA polymerase catalyzes the transcription of DNA into RNA using the four ribonucleoside triphosphates as substrates. Component of RNA polymerase II which synthesizes mRNA precursors and many functional non-coding RNAs. Pol II is the central component of the basal RNA polymerase II transcription machinery. It is composed of mobile elements that move relative to each other. RPB9 is part of the upper jaw surrounding the central large cleft and thought to grab the incoming DNA template. This chain is DNA-directed RNA polymerase II subunit RPB9, found in Drosophila melanogaster (Fruit fly).